We begin with the raw amino-acid sequence, 430 residues long: uncharacterized protein (430 aa).

Transmembrane regions (helical) follow at residues 18–38 (LFLL…NTFV), 49–69 (FIDL…TFYL), 80–100 (VFIL…VLLA), 109–129 (VLIG…FNVL), 145–165 (FMGI…GFVI), 175–195 (TVIF…SFFL), 235–255 (IFVF…LALG), 256–276 (TFGL…SRLI), 285–305 (ILLG…HMSF), 307–327 (TLLT…VPYV), 353–373 (MFLN…VALL), and 377–397 (VGIP…YYFV). The interval 407–430 (GENETMEEDGQKRVTEPTLLKGER) is disordered. Over residues 415 to 430 (DGQKRVTEPTLLKGER) the composition is skewed to basic and acidic residues.

The protein resides in the cell membrane. This is an uncharacterized protein from Bacillus subtilis (strain 168).